Here is a 63-residue protein sequence, read N- to C-terminus: Protein sigN172 (63 aa).

The polypeptide is Protein sigN172 (Dictyostelium discoideum (Social amoeba)).